The following is a 116-amino-acid chain: UPF0499 protein ATEG_06693 (116 aa).

Residues 1–18 (MKLTGLLSLALLTTLALA) form the signal peptide. 3 disulfides stabilise this stretch: C32/C46, C36/C49, and C42/C54.

The protein belongs to the UPF0499 family.

It is found in the secreted. This is UPF0499 protein ATEG_06693 from Aspergillus terreus (strain NIH 2624 / FGSC A1156).